A 227-amino-acid chain; its full sequence is Mitochondrial inner membrane protease ATP23 (227 aa).

His129 is an a divalent metal cation binding site. Glu130 is a catalytic residue. Position 133 (His133) interacts with a divalent metal cation.

This sequence belongs to the peptidase M76 family.

Its subcellular location is the mitochondrion inner membrane. Functionally, has a dual role in the assembly of mitochondrial ATPase. Acts as a protease that removes N-terminal residues of mitochondrial ATPase CF(0) subunit 6 at the intermembrane space side. Also involved in the correct assembly of the membrane-embedded ATPase CF(0) particle, probably mediating association of subunit 6 with the subunit 9 ring. The polypeptide is Mitochondrial inner membrane protease ATP23 (ATP23) (Cryptococcus neoformans var. neoformans serotype D (strain JEC21 / ATCC MYA-565) (Filobasidiella neoformans)).